A 209-amino-acid chain; its full sequence is GTP-binding protein RHB1 (209 aa).

Met-1 carries the N-acetylmethionine modification. 9 residues coordinate GTP: Gly-28, Lys-29, Thr-30, Thr-31, Val-42, Tyr-45, Thr-48, Asp-132, and Ala-172. Thr-30 contributes to the Mg(2+) binding site. Positions 45–53 match the Effector region motif; the sequence is YYPTIENEF. Thr-48 is a binding site for Mg(2+). The residue at position 206 (Cys-206) is a Cysteine methyl ester. Cys-206 carries the S-farnesyl cysteine lipid modification. A propeptide spans 207 to 209 (removed in mature form); it reads SIM.

This sequence belongs to the small GTPase superfamily. Rheb family. As to quaternary structure, interacts with BTN2.

It localises to the cell membrane. The enzyme catalyses GTP + H2O = GDP + phosphate + H(+). Its function is as follows. Binds GTP and exhibits intrinsic GTPase activity. Involved in the regulation of arginine and lysine uptake. Acts through the CAN1 permease. The sequence is that of GTP-binding protein RHB1 (RHB1) from Saccharomyces cerevisiae (strain ATCC 204508 / S288c) (Baker's yeast).